The primary structure comprises 176 residues: CASP-like protein 5A1 (176 aa).

Residues 1 to 45 are Cytoplasmic-facing; it reads MDASHPAVYPVGVPPTAVDPPPRVRMKDYEGMPSTLGGLVLRSGQ. A helical transmembrane segment spans residues 46-66; sequence FACAVTALSIMISIPDFSSVT. A topological domain (extracellular) is located at residue Ala67. A helical transmembrane segment spans residues 68-88; that stretch reads FCYLVAAMALQLLWSVSLAVV. The Cytoplasmic segment spans residues 89 to 102; it reads DGYALLLRRTLHNP. The chain crosses the membrane as a helical span at residues 103–123; that stretch reads VLLSLLVIGDWVTSTLSLAAA. Residues 124-151 are Extracellular-facing; sequence CSSAGITVLIDSDLAQCAHNHCGRYEAA. The helical transmembrane segment at 152–172 threads the bilayer; that stretch reads VAMAFLTWFLVSLSFFFSFWL. Topologically, residues 173–176 are cytoplasmic; sequence LATR.

It belongs to the Casparian strip membrane proteins (CASP) family. As to quaternary structure, homodimer and heterodimers.

Its subcellular location is the cell membrane. This Selaginella moellendorffii (Spikemoss) protein is CASP-like protein 5A1.